A 134-amino-acid chain; its full sequence is Auxin-responsive protein SAUR40 (134 aa).

It belongs to the ARG7 family. As to quaternary structure, interacts with and inhibits PP2C-D subfamily of type 2C phosphatases such as PP2C67/PP2C-D1.

Its subcellular location is the cytoplasm. In terms of biological role, provide a mechanistic link between auxin and plasma membrane H(+)-ATPases (PM H(+)-ATPases, e.g. AHA1 and AHA2), and triggers PM H(+)-ATPases activity by promoting phosphorylation of their C-terminal autoinhibitory domain as a result of PP2C-D subfamily of type 2C phosphatases inhibition, thus leading to the acidification of the apoplast and the facilitation of solutes and water uptake to drive cell expansion. Plays a role in the regulation of cell expansion, root meristem patterning and auxin transport. The polypeptide is Auxin-responsive protein SAUR40 (Arabidopsis thaliana (Mouse-ear cress)).